Reading from the N-terminus, the 156-residue chain is Small ribosomal subunit protein uS7 (156 aa).

It belongs to the universal ribosomal protein uS7 family. In terms of assembly, part of the 30S ribosomal subunit. Contacts proteins S9 and S11.

In terms of biological role, one of the primary rRNA binding proteins, it binds directly to 16S rRNA where it nucleates assembly of the head domain of the 30S subunit. Is located at the subunit interface close to the decoding center, probably blocks exit of the E-site tRNA. The chain is Small ribosomal subunit protein uS7 from Syntrophomonas wolfei subsp. wolfei (strain DSM 2245B / Goettingen).